The sequence spans 316 residues: 4-hydroxy-3-methylbut-2-enyl diphosphate reductase (316 aa).

C12 provides a ligand contact to [4Fe-4S] cluster. (2E)-4-hydroxy-3-methylbut-2-enyl diphosphate contacts are provided by H41 and H74. The dimethylallyl diphosphate site is built by H41 and H74. 2 residues coordinate isopentenyl diphosphate: H41 and H74. C96 is a [4Fe-4S] cluster binding site. Residue H124 coordinates (2E)-4-hydroxy-3-methylbut-2-enyl diphosphate. H124 contacts dimethylallyl diphosphate. Residue H124 coordinates isopentenyl diphosphate. E126 (proton donor) is an active-site residue. (2E)-4-hydroxy-3-methylbut-2-enyl diphosphate is bound at residue T167. C197 is a [4Fe-4S] cluster binding site. Residues S225, S226, N227, and S269 each coordinate (2E)-4-hydroxy-3-methylbut-2-enyl diphosphate. Dimethylallyl diphosphate is bound by residues S225, S226, N227, and S269. Isopentenyl diphosphate is bound by residues S225, S226, N227, and S269.

This sequence belongs to the IspH family. As to quaternary structure, homodimer. The cofactor is [4Fe-4S] cluster.

It catalyses the reaction isopentenyl diphosphate + 2 oxidized [2Fe-2S]-[ferredoxin] + H2O = (2E)-4-hydroxy-3-methylbut-2-enyl diphosphate + 2 reduced [2Fe-2S]-[ferredoxin] + 2 H(+). The catalysed reaction is dimethylallyl diphosphate + 2 oxidized [2Fe-2S]-[ferredoxin] + H2O = (2E)-4-hydroxy-3-methylbut-2-enyl diphosphate + 2 reduced [2Fe-2S]-[ferredoxin] + 2 H(+). Its pathway is isoprenoid biosynthesis; dimethylallyl diphosphate biosynthesis; dimethylallyl diphosphate from (2E)-4-hydroxy-3-methylbutenyl diphosphate: step 1/1. The protein operates within isoprenoid biosynthesis; isopentenyl diphosphate biosynthesis via DXP pathway; isopentenyl diphosphate from 1-deoxy-D-xylulose 5-phosphate: step 6/6. Catalyzes the conversion of 1-hydroxy-2-methyl-2-(E)-butenyl 4-diphosphate (HMBPP) into a mixture of isopentenyl diphosphate (IPP) and dimethylallyl diphosphate (DMAPP). Acts in the terminal step of the DOXP/MEP pathway for isoprenoid precursor biosynthesis. The sequence is that of 4-hydroxy-3-methylbut-2-enyl diphosphate reductase from Klebsiella pneumoniae (strain 342).